The following is a 223-amino-acid chain: Cytotoxic T-lymphocyte protein 4 (223 aa).

The signal sequence occupies residues 1 to 35; that stretch reads MACLGFQRHKAQLNLATRTWPCTLLFFLLFIPVFC. Residues 36–161 lie on the Extracellular side of the membrane; sequence KAMHVAQPAV…IDPEPCPDSD (126 aa). An Ig-like V-type domain is found at 39-140; it reads HVAQPAVVLA…VELMYPPPYY (102 aa). The interval 46 to 50 is homodimerization; sequence VLASS. 2 disulfides stabilise this stretch: Cys-58–Cys-129 and Cys-85–Cys-103. Asn-113 is a glycosylation site (N-linked (GlcNAc...) asparagine). The tract at residues 134-139 is important for interaction with CD80 and CD86; sequence MYPPPY. A glycan (N-linked (GlcNAc...) asparagine) is linked at Asn-145. The homodimerization stretch occupies residues 150–155; the sequence is YVIDPE. A helical transmembrane segment spans residues 162–182; that stretch reads FLLWILAAVSSGLFFYSFLLT. The Cytoplasmic portion of the chain corresponds to 183–223; the sequence is AVSLSKMLKKRSPLTTGVYVKMPPTEPECEKQFQPYFIPIN. At Tyr-201 the chain carries Phosphotyrosine; by TXK and JAK2.

In terms of assembly, homodimer; disulfide-linked. Binds to CD80/B7-1 and CD86/B7.2. Interacts with ICOSLG. N-glycosylation is important for dimerization. In terms of processing, phosphorylation at Tyr-201 prevents binding to the AP-2 adapter complex, blocks endocytosis, and leads to retention of CTLA4 on the cell surface. As to expression, widely expressed with highest levels in lymphoid tissues. Detected in activated T-cells where expression levels are 30- to 50-fold less than CD28, the stimulatory coreceptor, on the cell surface following activation.

It is found in the cell membrane. Functionally, inhibitory receptor acting as a major negative regulator of T-cell responses. The affinity of CTLA4 for its natural B7 family ligands, CD80 and CD86, is considerably stronger than the affinity of their cognate stimulatory coreceptor CD28. In Homo sapiens (Human), this protein is Cytotoxic T-lymphocyte protein 4 (CTLA4).